An 891-amino-acid chain; its full sequence is Probable serine/threonine-protein kinase mkcC (891 aa).

Disordered stretches follow at residues I24–I70, A85–S121, D264–K435, N495–S526, and T565–D588. Over residues Q29–P41 the composition is skewed to low complexity. A compositionally biased stretch (basic and acidic residues) spans E45–E58. Low complexity-rich tracts occupy residues T61–I70, N86–N105, S297–K314, S322–S360, and T379–S397. A compositionally biased stretch (basic residues) spans R422 to A432. The segment covering N495–S522 has biased composition (low complexity). A Protein kinase domain is found at Y616–I864. Residues I622–V630 and K645 contribute to the ATP site. Residue D735 is the Proton acceptor of the active site.

Belongs to the protein kinase superfamily. STE Ser/Thr protein kinase family. STE20 subfamily. The cofactor is Mg(2+).

The catalysed reaction is L-seryl-[protein] + ATP = O-phospho-L-seryl-[protein] + ADP + H(+). The enzyme catalyses L-threonyl-[protein] + ATP = O-phospho-L-threonyl-[protein] + ADP + H(+). This chain is Probable serine/threonine-protein kinase mkcC, found in Dictyostelium discoideum (Social amoeba).